The following is a 153-amino-acid chain: Probable ubiquitin-conjugating enzyme E2 C (153 aa).

The 148-residue stretch at 6–153 (SVSKRLQSEL…KRYQEATSRP (148 aa)) folds into the UBC core domain. The active-site Glycyl thioester intermediate is the cysteine 90.

It belongs to the ubiquitin-conjugating enzyme family. Component of the APC/C complex. In terms of processing, autoubiquitinated by the APC/C complex, leading to its degradation by the proteasome.

It carries out the reaction S-ubiquitinyl-[E1 ubiquitin-activating enzyme]-L-cysteine + [E2 ubiquitin-conjugating enzyme]-L-cysteine = [E1 ubiquitin-activating enzyme]-L-cysteine + S-ubiquitinyl-[E2 ubiquitin-conjugating enzyme]-L-cysteine.. The protein operates within protein modification; protein ubiquitination. Catalyzes the covalent attachment of ubiquitin to other proteins. Acts as an essential factor of the anaphase promoting complex/cyclosome (APC/C), a cell cycle-regulated ubiquitin ligase that controls progression through mitosis. Acts by initiating polyubiquitin chains on APC/C substrates, leading to the degradation of APC/C substrates by the proteasome and promoting mitotic exit. This is Probable ubiquitin-conjugating enzyme E2 C (ube2c) from Dictyostelium discoideum (Social amoeba).